The chain runs to 543 residues: Membrane protein insertase YidC (543 aa).

The chain crosses the membrane as a helical span at residues phenylalanine 7–tyrosine 27. A disordered region spans residues glutamine 30–serine 61. Positions valine 35–serine 61 are enriched in polar residues. The next 4 helical transmembrane spans lie at phenylalanine 341–isoleucine 361, glycine 421–leucine 441, phenylalanine 451–threonine 471, and proline 499–isoleucine 519.

The protein belongs to the OXA1/ALB3/YidC family. Type 1 subfamily. Interacts with the Sec translocase complex via SecD. Specifically interacts with transmembrane segments of nascent integral membrane proteins during membrane integration.

It is found in the cell inner membrane. In terms of biological role, required for the insertion and/or proper folding and/or complex formation of integral membrane proteins into the membrane. Involved in integration of membrane proteins that insert both dependently and independently of the Sec translocase complex, as well as at least some lipoproteins. Aids folding of multispanning membrane proteins. The sequence is that of Membrane protein insertase YidC from Pseudoalteromonas atlantica (strain T6c / ATCC BAA-1087).